Consider the following 480-residue polypeptide: MKRRSIFMYYCFCFLLKYVAFSNVPNPNTTIGHFEICEVNTSSGDAEECVLENEFGKMFLFICDIDYNEMSKNIVLPSECAKKTYIDHVNPNGTSPEVNTYDIFPDLIAANESQFRDKFYFYGTPYSSKDIDFICLCFSETKPDIKHVMKMSFKKMTKKIKGCDFGDNIPTKKDLTNGKALYENSSCHIYAYPGDVIGINCYKKDINNIYNNNLELQPNNCFHNVYYEDDILLSSKNLIPNSRVIPDPSNDVKLSKMHSYMSYIILPDEINENVKISCACKRDEYIGTMFLYVNTSKNILTSPDNNVEEIAPLNDHYISIGDMWDMGLHENPEQIQGIISNHANKKYYEHMKIYKSNKMDSSDDDESNETESSENESNERTHNGNRANKDANNSEKMTGNRRKKNNSINNTNYYSNYEDDNGINISTHDKYYEDQHFGNNGPLRKKRTFWQNMFGTSSSYYEVFNYFSIAFILIIHMLLL.

An N-terminal signal peptide occupies residues 1–22 (MKRRSIFMYYCFCFLLKYVAFS). 2 6-Cys domains span residues 23-156 (NVPN…FKKM) and 159-298 (KIKG…TSKN). Asparagine 28, asparagine 40, asparagine 92, asparagine 111, and asparagine 184 each carry an N-linked (GlcNAc...) asparagine glycan. 6 disulfide bridges follow: cysteine 37-cysteine 49, cysteine 63-cysteine 137, cysteine 80-cysteine 135, cysteine 163-cysteine 187, cysteine 201-cysteine 280, and cysteine 221-cysteine 278. 7 N-linked (GlcNAc...) asparagine glycosylation sites follow: asparagine 294, asparagine 368, asparagine 375, asparagine 392, asparagine 405, asparagine 409, and asparagine 424. A disordered region spans residues 358–415 (KMDSSDDDESNETESSENESNERTHNGNRANKDANNSEKMTGNRRKKNNSINNTNYYS). Acidic residues predominate over residues 362–376 (SDDDESNETESSENE). Over residues 377-393 (SNERTHNGNRANKDANN) the composition is skewed to basic and acidic residues. Positions 406-415 (NSINNTNYYS) are enriched in low complexity. Serine 457 carries GPI-anchor amidated serine lipidation. The propeptide at 458–480 (SSYYEVFNYFSIAFILIIHMLLL) is removed in mature form.

It localises to the cell surface. Its subcellular location is the cell membrane. Functionally, involved in sporozoite infection of hepatocytes and replication therein. The chain is Sporozoite surface protein P36p (P52) from Plasmodium yoelii yoelii.